Reading from the N-terminus, the 331-residue chain is Phosphate acyltransferase (331 aa).

This sequence belongs to the PlsX family. As to quaternary structure, homodimer. Probably interacts with PlsY.

It localises to the cytoplasm. It carries out the reaction a fatty acyl-[ACP] + phosphate = an acyl phosphate + holo-[ACP]. It participates in lipid metabolism; phospholipid metabolism. Catalyzes the reversible formation of acyl-phosphate (acyl-PO(4)) from acyl-[acyl-carrier-protein] (acyl-ACP). This enzyme utilizes acyl-ACP as fatty acyl donor, but not acyl-CoA. The chain is Phosphate acyltransferase from Chlorobaculum tepidum (strain ATCC 49652 / DSM 12025 / NBRC 103806 / TLS) (Chlorobium tepidum).